The chain runs to 72 residues: Translation initiation factor IF-1 (72 aa).

In terms of domain architecture, S1-like spans 1–72 (MAKDDVIEVE…TRGRIVWRGK (72 aa)).

The protein belongs to the IF-1 family. Component of the 30S ribosomal translation pre-initiation complex which assembles on the 30S ribosome in the order IF-2 and IF-3, IF-1 and N-formylmethionyl-tRNA(fMet); mRNA recruitment can occur at any time during PIC assembly.

Its subcellular location is the cytoplasm. One of the essential components for the initiation of protein synthesis. Stabilizes the binding of IF-2 and IF-3 on the 30S subunit to which N-formylmethionyl-tRNA(fMet) subsequently binds. Helps modulate mRNA selection, yielding the 30S pre-initiation complex (PIC). Upon addition of the 50S ribosomal subunit IF-1, IF-2 and IF-3 are released leaving the mature 70S translation initiation complex. The sequence is that of Translation initiation factor IF-1 from Caldanaerobacter subterraneus subsp. tengcongensis (strain DSM 15242 / JCM 11007 / NBRC 100824 / MB4) (Thermoanaerobacter tengcongensis).